A 402-amino-acid chain; its full sequence is CCA-adding enzyme (402 aa).

ATP is bound by residues G32 and R35. 2 residues coordinate CTP: G32 and R35. Mg(2+) contacts are provided by D45 and D47. 5 residues coordinate ATP: R116, D159, R162, R165, and R168. CTP-binding residues include R116, D159, R162, R165, and R168.

It belongs to the tRNA nucleotidyltransferase/poly(A) polymerase family. Bacterial CCA-adding enzyme type 3 subfamily. In terms of assembly, homodimer. Mg(2+) is required as a cofactor.

It catalyses the reaction a tRNA precursor + 2 CTP + ATP = a tRNA with a 3' CCA end + 3 diphosphate. The enzyme catalyses a tRNA with a 3' CCA end + 2 CTP + ATP = a tRNA with a 3' CCACCA end + 3 diphosphate. In terms of biological role, catalyzes the addition and repair of the essential 3'-terminal CCA sequence in tRNAs without using a nucleic acid template. Adds these three nucleotides in the order of C, C, and A to the tRNA nucleotide-73, using CTP and ATP as substrates and producing inorganic pyrophosphate. tRNA 3'-terminal CCA addition is required both for tRNA processing and repair. Also involved in tRNA surveillance by mediating tandem CCA addition to generate a CCACCA at the 3' terminus of unstable tRNAs. While stable tRNAs receive only 3'-terminal CCA, unstable tRNAs are marked with CCACCA and rapidly degraded. The sequence is that of CCA-adding enzyme from Streptococcus pyogenes serotype M4 (strain MGAS10750).